A 99-amino-acid polypeptide reads, in one-letter code: MISQERLLKVILAPHISEKSTVCAENDNTVVFRVAIDATKAEVKAAVAQLFEVEVDSVRTLVNKGKTKRTGARMGRRVDWKKAYVTLADGAEIDFVGAE.

The protein belongs to the universal ribosomal protein uL23 family. Part of the 50S ribosomal subunit. Contacts protein L29, and trigger factor when it is bound to the ribosome.

Its function is as follows. One of the early assembly proteins it binds 23S rRNA. One of the proteins that surrounds the polypeptide exit tunnel on the outside of the ribosome. Forms the main docking site for trigger factor binding to the ribosome. The protein is Large ribosomal subunit protein uL23 of Shewanella sediminis (strain HAW-EB3).